We begin with the raw amino-acid sequence, 636 residues long: Polyadenylate-binding protein 1 (636 aa).

Methionine 1 bears the N-acetylmethionine mark. 4 consecutive RRM domains span residues 11–89 (ASLY…WSQR), 99–175 (GNIF…RFKS), 191–268 (TNVY…RAQK), and 294–370 (VNLY…LAQR). A CSDE1-binding region spans residues 166–289 (RKVFVGRFKS…FEQMKQDRIT (124 aa)). An N6-methyllysine modification is found at lysine 299. Residue serine 315 is modified to Phosphoserine. Residue threonine 319 is modified to Phosphothreonine. Omega-N-methylarginine is present on residues arginine 385, arginine 419, arginine 432, and arginine 436. Residues arginine 455 and arginine 460 each carry the omega-N-methylated arginine; by CARM1 modification. Omega-N-methylarginine is present on residues arginine 475 and arginine 481. Position 493 is an asymmetric dimethylarginine; alternate (arginine 493). A Dimethylated arginine; alternate modification is found at arginine 493. Arginine 493 bears the Omega-N-methylarginine; alternate mark. Arginine 506 carries the post-translational modification Omega-N-methylarginine. Residue lysine 512 is modified to N6-acetyllysine. At arginine 518 the chain carries Omega-N-methylarginine. In terms of domain architecture, PABC spans 542-619 (QEPLTASMLA…AVAVLQAHQA (78 aa)).

Belongs to the polyadenylate-binding protein type-1 family. As to quaternary structure, may form homodimers. Component of a multisubunit autoregulatory ribonucleoprotein complex (ARC), at least composed of IGF2BP1, PABPC1 and CSDE1. Directly interacts with IGF2BP1. Part of a complex associated with the FOS mCRD domain and consisting of HNRPD, SYNCRIP, PAIP1 and CSDE1/UNR. Interacts with PAIP1 and PAIP2 (via the PABPC1-interacting motifs PAM1 and PAM2). Interacts with PAIP1 with a 1:1 stoichiometry and with PAIP2 with a 1:2 stoichiometry. The interaction with CSDE1 is direct and RNA-independent. Found in a mRNP complex with YBX2. Interacts with TENT2/GLD2. Identified in the spliceosome C complex. Identified in a mRNP complex, at least composed of DHX9, DDX3X, ELAVL1, HNRNPU, IGF2BP1, ILF3, PABPC1, PCBP2, PTBP2, STAU1, STAU2, SYNCRIP and YBX1. The interaction with DDX3X is direct and RNA-independent. This interaction increases in stressed cells and decreases during cell recovery. Identified in a IGF2BP1-dependent mRNP granule complex containing untranslated mRNAs. Interacts with NXF1/TAP. Interacts with PIWIL1. Interacts with AGO1, AGO2, GSPT1 and GSPT2. Interacts with LARP4B. Interacts (via the second and third RRM domains and the C-terminus) with PAIP2B (via central acidic portion and C-terminus). Forms a complex with LARP1 and SHFL. Interacts with LARP4. Interacts with ZFC3H1 in a RNase-sensitive manner. Interacts with TRIM71 (via NHL repeats) in an RNA-dependent manner. Interacts with TENT5C; the interaction has no effect on TENT5C poly(A) polymerase function. Interacts with G3BP1 and G3BP2. Interacts with ENDOV; the interaction is RNA-dependent and stimulates ENDOV activity. Interacts with UPF1; the interaction is RNA-dependent. Interacts with IGF2BP2 and IGF2BP3. May interact with SETX. Interacts with RBM46. Interacts with PAN3. In terms of processing, phosphorylated by MAPKAPK2. Post-translationally, methylated by CARM1. Arg-493 is dimethylated, probably to asymmetric dimethylarginine.

The protein localises to the cytoplasm. It is found in the stress granule. Its subcellular location is the nucleus. The protein resides in the cell projection. It localises to the lamellipodium. Functionally, binds the poly(A) tail of mRNA, including that of its own transcript, and regulates processes of mRNA metabolism such as pre-mRNA splicing and mRNA stability. Its function in translational initiation regulation can either be enhanced by PAIP1 or repressed by PAIP2. Can probably bind to cytoplasmic RNA sequences other than poly(A) in vivo. Binds to N6-methyladenosine (m6A)-containing mRNAs and contributes to MYC stability by binding to m6A-containing MYC mRNAs. Involved in translationally coupled mRNA turnover. Implicated with other RNA-binding proteins in the cytoplasmic deadenylation/translational and decay interplay of the FOS mRNA mediated by the major coding-region determinant of instability (mCRD) domain. Involved in regulation of nonsense-mediated decay (NMD) of mRNAs containing premature stop codons; for the recognition of premature termination codons (PTC) and initiation of NMD a competitive interaction between UPF1 and PABPC1 with the ribosome-bound release factors is proposed. By binding to long poly(A) tails, may protect them from uridylation by ZCCHC6/ZCCHC11 and hence contribute to mRNA stability. The chain is Polyadenylate-binding protein 1 (PABPC1) from Bos taurus (Bovine).